Consider the following 452-residue polypeptide: Bifunctional protein GlmU (452 aa).

Residues 1–233 (MTDRPFAALI…AWEVAGVNSR (233 aa)) form a pyrophosphorylase region. Residues 11 to 14 (LAAG), K25, Q76, 81 to 82 (GT), 104 to 106 (YGD), G144, E159, N174, and N231 each bind UDP-N-acetyl-alpha-D-glucosamine. D106 serves as a coordination point for Mg(2+). Residue N231 participates in Mg(2+) binding. Residues 234–254 (AELAAVEAEWQRRRRLAAMAD) are linker. The tract at residues 255–452 (GATLIAPETV…AMKIKKAARK (198 aa)) is N-acetyltransferase. UDP-N-acetyl-alpha-D-glucosamine contacts are provided by R320 and K338. The active-site Proton acceptor is the H350. Residues Y353 and N364 each coordinate UDP-N-acetyl-alpha-D-glucosamine. Residues A367, 373-374 (NY), S392, A410, and R427 each bind acetyl-CoA.

The protein in the N-terminal section; belongs to the N-acetylglucosamine-1-phosphate uridyltransferase family. This sequence in the C-terminal section; belongs to the transferase hexapeptide repeat family. Homotrimer. Mg(2+) serves as cofactor.

It localises to the cytoplasm. The catalysed reaction is alpha-D-glucosamine 1-phosphate + acetyl-CoA = N-acetyl-alpha-D-glucosamine 1-phosphate + CoA + H(+). It carries out the reaction N-acetyl-alpha-D-glucosamine 1-phosphate + UTP + H(+) = UDP-N-acetyl-alpha-D-glucosamine + diphosphate. Its pathway is nucleotide-sugar biosynthesis; UDP-N-acetyl-alpha-D-glucosamine biosynthesis; N-acetyl-alpha-D-glucosamine 1-phosphate from alpha-D-glucosamine 6-phosphate (route II): step 2/2. It functions in the pathway nucleotide-sugar biosynthesis; UDP-N-acetyl-alpha-D-glucosamine biosynthesis; UDP-N-acetyl-alpha-D-glucosamine from N-acetyl-alpha-D-glucosamine 1-phosphate: step 1/1. The protein operates within bacterial outer membrane biogenesis; LPS lipid A biosynthesis. Its function is as follows. Catalyzes the last two sequential reactions in the de novo biosynthetic pathway for UDP-N-acetylglucosamine (UDP-GlcNAc). The C-terminal domain catalyzes the transfer of acetyl group from acetyl coenzyme A to glucosamine-1-phosphate (GlcN-1-P) to produce N-acetylglucosamine-1-phosphate (GlcNAc-1-P), which is converted into UDP-GlcNAc by the transfer of uridine 5-monophosphate (from uridine 5-triphosphate), a reaction catalyzed by the N-terminal domain. The polypeptide is Bifunctional protein GlmU (Rhizorhabdus wittichii (strain DSM 6014 / CCUG 31198 / JCM 15750 / NBRC 105917 / EY 4224 / RW1) (Sphingomonas wittichii)).